Consider the following 175-residue polypeptide: Transcription factor E (175 aa).

An HTH TFE/IIEalpha-type domain is found at 8-90 (NDPVIQKYLH…LWTFQYENIP (83 aa)).

The protein belongs to the TFE family. Monomer. Interaction with RNA polymerase subunits RpoF and RpoE is necessary for Tfe stimulatory transcription activity. Able to interact with Tbp and RNA polymerase in the absence of DNA promoter. Interacts both with the preinitiation and elongation complexes.

Functionally, transcription factor that plays a role in the activation of archaeal genes transcribed by RNA polymerase. Facilitates transcription initiation by enhancing TATA-box recognition by TATA-box-binding protein (Tbp), and transcription factor B (Tfb) and RNA polymerase recruitment. Not absolutely required for transcription in vitro, but particularly important in cases where Tbp or Tfb function is not optimal. It dynamically alters the nucleic acid-binding properties of RNA polymerases by stabilizing the initiation complex and destabilizing elongation complexes. Seems to translocate with the RNA polymerase following initiation and acts by binding to the non template strand of the transcription bubble in elongation complexes. In Natronomonas pharaonis (strain ATCC 35678 / DSM 2160 / CIP 103997 / JCM 8858 / NBRC 14720 / NCIMB 2260 / Gabara) (Halobacterium pharaonis), this protein is Transcription factor E.